The sequence spans 287 residues: Ribosomal RNA small subunit methyltransferase A (287 aa).

6 residues coordinate S-adenosyl-L-methionine: N28, L30, G55, E76, D101, and N125.

It belongs to the class I-like SAM-binding methyltransferase superfamily. rRNA adenine N(6)-methyltransferase family. RsmA subfamily.

The protein localises to the cytoplasm. The enzyme catalyses adenosine(1518)/adenosine(1519) in 16S rRNA + 4 S-adenosyl-L-methionine = N(6)-dimethyladenosine(1518)/N(6)-dimethyladenosine(1519) in 16S rRNA + 4 S-adenosyl-L-homocysteine + 4 H(+). In terms of biological role, specifically dimethylates two adjacent adenosines (A1518 and A1519) in the loop of a conserved hairpin near the 3'-end of 16S rRNA in the 30S particle. May play a critical role in biogenesis of 30S subunits. The sequence is that of Ribosomal RNA small subunit methyltransferase A from Alkaliphilus oremlandii (strain OhILAs) (Clostridium oremlandii (strain OhILAs)).